Here is a 121-residue protein sequence, read N- to C-terminus: Cell division protein FtsB (121 aa).

The Cytoplasmic segment spans residues 1–6 (MRNWRW). The chain crosses the membrane as a helical span at residues 7–24 (LLLVLAVLLAWLQYRFWF). At 25-121 (GPGNSGEVMM…PASTDPVDHP (97 aa)) the chain is on the periplasmic side. The stretch at 31-66 (EVMMLEAQVAHQTQDNEGLRQRNQALAAEVKDLKDG) forms a coiled coil. Residues 94 to 121 (APLPAPASPETAAPAQQAPASTDPVDHP) are disordered. Low complexity predominate over residues 101–121 (SPETAAPAQQAPASTDPVDHP).

It belongs to the FtsB family. In terms of assembly, part of a complex composed of FtsB, FtsL and FtsQ.

Its subcellular location is the cell inner membrane. In terms of biological role, essential cell division protein. May link together the upstream cell division proteins, which are predominantly cytoplasmic, with the downstream cell division proteins, which are predominantly periplasmic. The sequence is that of Cell division protein FtsB from Xanthomonas oryzae pv. oryzae (strain MAFF 311018).